Consider the following 230-residue polypeptide: Large ribosomal subunit protein uL1 (230 aa).

Belongs to the universal ribosomal protein uL1 family. In terms of assembly, part of the 50S ribosomal subunit.

In terms of biological role, binds directly to 23S rRNA. The L1 stalk is quite mobile in the ribosome, and is involved in E site tRNA release. Its function is as follows. Protein L1 is also a translational repressor protein, it controls the translation of the L11 operon by binding to its mRNA. The chain is Large ribosomal subunit protein uL1 from Bradyrhizobium diazoefficiens (strain JCM 10833 / BCRC 13528 / IAM 13628 / NBRC 14792 / USDA 110).